A 392-amino-acid polypeptide reads, in one-letter code: Alanine--glyoxylate aminotransferase (392 aa).

K209 bears the N6-(pyridoxal phosphate)lysine mark. K225 carries the N6-acetyllysine; alternate modification. K225 is subject to N6-succinyllysine; alternate. K234 and K312 each carry N6-acetyllysine. Residue R360 coordinates substrate. Residues 390–392 (SQL) carry the Microbody targeting signal motif.

This sequence belongs to the class-V pyridoxal-phosphate-dependent aminotransferase family. Homodimer. Pyridoxal 5'-phosphate is required as a cofactor.

The protein localises to the peroxisome. It carries out the reaction L-serine + pyruvate = 3-hydroxypyruvate + L-alanine. It catalyses the reaction glyoxylate + L-alanine = glycine + pyruvate. Functionally, peroxisomal aminotransferase that catalyzes the transamination of glyoxylate to glycine and contributes to the glyoxylate detoxification. Also catalyzes the transamination between L-serine and pyruvate and contributes to gluconeogenesis from the L-serine metabolism. The sequence is that of Alanine--glyoxylate aminotransferase from Oryctolagus cuniculus (Rabbit).